The chain runs to 710 residues: Choline transporter-like protein 5 (710 aa).

A disordered region spans residues Met-1–Phe-21. Topologically, residues Met-1 to Asp-32 are cytoplasmic. A helical transmembrane segment spans residues Val-33–Ala-53. Residues Trp-54–Trp-236 are Extracellular-facing. Residues Asn-82 and Asn-184 are each glycosylated (N-linked (GlcNAc...) asparagine). Residues Lys-237–Leu-257 form a helical membrane-spanning segment. Residues Arg-258–Thr-260 lie on the Cytoplasmic side of the membrane. Residues Ala-261–Trp-281 traverse the membrane as a helical segment. Residues Tyr-282–Trp-319 are Extracellular-facing. Residues Phe-320 to Leu-340 traverse the membrane as a helical segment. Topologically, residues Arg-341 to Gln-345 are cytoplasmic. Residues Val-346–Ile-366 traverse the membrane as a helical segment. The Extracellular portion of the chain corresponds to Tyr-367–Pro-368. The chain crosses the membrane as a helical span at residues Val-369 to Leu-389. The Cytoplasmic portion of the chain corresponds to Ala-390–Asn-454. A helical transmembrane segment spans residues Leu-455–Gly-475. Residues Ala-476 to Ser-509 lie on the Extracellular side of the membrane. A helical transmembrane segment spans residues Leu-510–Leu-530. The Cytoplasmic segment spans residues Asp-531–Tyr-604. The chain crosses the membrane as a helical span at residues Phe-605 to Leu-625. The Extracellular portion of the chain corresponds to Phe-626–Tyr-643. Residues Trp-644–Val-664 form a helical membrane-spanning segment. Residues Tyr-665–Gln-710 are Cytoplasmic-facing.

The protein belongs to the CTL (choline transporter-like) family.

It localises to the cell membrane. It catalyses the reaction choline(out) + n H(+)(in) = choline(in) + n H(+)(out). Choline/H+ antiporter. The polypeptide is Choline transporter-like protein 5 (Slc44a5) (Mus musculus (Mouse)).